The chain runs to 311 residues: Cyclin-dependent kinase B1-2 (311 aa).

The Protein kinase domain occupies Tyr-4–Phe-303. Residues Val-10–Val-18 and Lys-33 contribute to the ATP site. Tyr-15 carries the post-translational modification Phosphotyrosine. Residue Asp-144 is the Proton acceptor of the active site. Residue Thr-178 is modified to Phosphothreonine.

Belongs to the protein kinase superfamily. CMGC Ser/Thr protein kinase family. CDC2/CDKX subfamily. As to quaternary structure, interacts with CKS1. Expressed in flowers.

It catalyses the reaction L-seryl-[protein] + ATP = O-phospho-L-seryl-[protein] + ADP + H(+). The enzyme catalyses L-threonyl-[protein] + ATP = O-phospho-L-threonyl-[protein] + ADP + H(+). It carries out the reaction [DNA-directed RNA polymerase] + ATP = phospho-[DNA-directed RNA polymerase] + ADP + H(+). Functionally, together with CDKB1-1, promotes both the last division in the stomatal cell lineage as well as the number of stomata. In collaboration with MYB124 and MYB88, restrict the G1/S transition and chloroplast and nuclear number during stomatal formation, and normally maintain fate and developmental progression throughout the stomatal cell lineage. This chain is Cyclin-dependent kinase B1-2 (CDKB1-2), found in Arabidopsis thaliana (Mouse-ear cress).